A 211-amino-acid polypeptide reads, in one-letter code: Endonuclease V (211 aa).

Residues D37 and D102 each contribute to the Mg(2+) site.

It belongs to the endonuclease V family. The cofactor is Mg(2+).

It is found in the cytoplasm. The catalysed reaction is Endonucleolytic cleavage at apurinic or apyrimidinic sites to products with a 5'-phosphate.. DNA repair enzyme involved in the repair of deaminated bases. Selectively cleaves double-stranded DNA at the second phosphodiester bond 3' to a deoxyinosine leaving behind the intact lesion on the nicked DNA. The chain is Endonuclease V from Ignicoccus hospitalis (strain KIN4/I / DSM 18386 / JCM 14125).